The primary structure comprises 28 residues: Ornatin-D (28 aa).

Belongs to the ornatin family.

It is found in the secreted. Functionally, potent inhibitor of fibrinogen interaction with platelet receptors expressed on glycoprotein IIb-IIIa complex. May prevent blood from clotting during either feeding and/or storage of ingested blood. The protein is Ornatin-D of Placobdella ornata (Turtle leech).